The chain runs to 590 residues: 2-isopropylmalate synthase (590 aa).

Positions 40–314 constitute a Pyruvate carboxyltransferase domain; sequence PRWCAVDLRD…DPQIDFSDID (275 aa). Mg(2+)-binding residues include D49, H253, H255, and N289. The tract at residues 456–590 is regulatory domain; that stretch reads APETESDAKW…SSVPAELAGV (135 aa).

The protein belongs to the alpha-IPM synthase/homocitrate synthase family. LeuA type 2 subfamily. In terms of assembly, homodimer. Mg(2+) is required as a cofactor.

The protein resides in the cytoplasm. It carries out the reaction 3-methyl-2-oxobutanoate + acetyl-CoA + H2O = (2S)-2-isopropylmalate + CoA + H(+). The protein operates within amino-acid biosynthesis; L-leucine biosynthesis; L-leucine from 3-methyl-2-oxobutanoate: step 1/4. In terms of biological role, catalyzes the condensation of the acetyl group of acetyl-CoA with 3-methyl-2-oxobutanoate (2-ketoisovalerate) to form 3-carboxy-3-hydroxy-4-methylpentanoate (2-isopropylmalate). The polypeptide is 2-isopropylmalate synthase (Leifsonia xyli subsp. xyli (strain CTCB07)).